Consider the following 241-residue polypeptide: Zinc finger CCHC domain-containing protein 24 (241 aa).

A phosphoserine mark is found at Ser65 and Ser93. The segment at 132–149 adopts a CCHC-type zinc-finger fold; that stretch reads YLCHLCFNKGHYIKDCPQ.

The chain is Zinc finger CCHC domain-containing protein 24 from Mus musculus (Mouse).